The following is a 263-amino-acid chain: 3-methyl-2-oxobutanoate hydroxymethyltransferase (263 aa).

2 residues coordinate Mg(2+): Asp-45 and Asp-84. 3-methyl-2-oxobutanoate contacts are provided by residues 45-46 (DS), Asp-84, and Lys-112. Glu-114 contributes to the Mg(2+) binding site. The Proton acceptor role is filled by Glu-180.

It belongs to the PanB family. Homodecamer; pentamer of dimers. It depends on Mg(2+) as a cofactor.

The protein resides in the cytoplasm. It carries out the reaction 3-methyl-2-oxobutanoate + (6R)-5,10-methylene-5,6,7,8-tetrahydrofolate + H2O = 2-dehydropantoate + (6S)-5,6,7,8-tetrahydrofolate. The protein operates within cofactor biosynthesis; (R)-pantothenate biosynthesis; (R)-pantoate from 3-methyl-2-oxobutanoate: step 1/2. Catalyzes the reversible reaction in which hydroxymethyl group from 5,10-methylenetetrahydrofolate is transferred onto alpha-ketoisovalerate to form ketopantoate. The chain is 3-methyl-2-oxobutanoate hydroxymethyltransferase from Klebsiella pneumoniae subsp. pneumoniae (strain ATCC 700721 / MGH 78578).